We begin with the raw amino-acid sequence, 354 residues long: UDP-N-acetylglucosamine--N-acetylmuramyl-(pentapeptide) pyrophosphoryl-undecaprenol N-acetylglucosamine transferase (354 aa).

UDP-N-acetyl-alpha-D-glucosamine-binding positions include 13–15 (SGG), Asn-125, Arg-161, Ser-189, Ile-242, 261–266 (ALTVSE), and Gln-286.

This sequence belongs to the glycosyltransferase 28 family. MurG subfamily.

The protein localises to the cell inner membrane. It catalyses the reaction di-trans,octa-cis-undecaprenyl diphospho-N-acetyl-alpha-D-muramoyl-L-alanyl-D-glutamyl-meso-2,6-diaminopimeloyl-D-alanyl-D-alanine + UDP-N-acetyl-alpha-D-glucosamine = di-trans,octa-cis-undecaprenyl diphospho-[N-acetyl-alpha-D-glucosaminyl-(1-&gt;4)]-N-acetyl-alpha-D-muramoyl-L-alanyl-D-glutamyl-meso-2,6-diaminopimeloyl-D-alanyl-D-alanine + UDP + H(+). Its pathway is cell wall biogenesis; peptidoglycan biosynthesis. Cell wall formation. Catalyzes the transfer of a GlcNAc subunit on undecaprenyl-pyrophosphoryl-MurNAc-pentapeptide (lipid intermediate I) to form undecaprenyl-pyrophosphoryl-MurNAc-(pentapeptide)GlcNAc (lipid intermediate II). The chain is UDP-N-acetylglucosamine--N-acetylmuramyl-(pentapeptide) pyrophosphoryl-undecaprenol N-acetylglucosamine transferase from Buchnera aphidicola subsp. Schizaphis graminum (strain Sg).